A 948-amino-acid polypeptide reads, in one-letter code: Protein translocase subunit SecA (948 aa).

ATP contacts are provided by residues Q90, 108-112 (GEGKT), and D509.

It belongs to the SecA family. Monomer and homodimer. Part of the essential Sec protein translocation apparatus which comprises SecA, SecYEG and auxiliary proteins SecDF. Other proteins may also be involved.

It localises to the cell inner membrane. The protein localises to the cellular thylakoid membrane. Its subcellular location is the cytoplasm. It carries out the reaction ATP + H2O + cellular proteinSide 1 = ADP + phosphate + cellular proteinSide 2.. In terms of biological role, part of the Sec protein translocase complex. Interacts with the SecYEG preprotein conducting channel. Has a central role in coupling the hydrolysis of ATP to the transfer of proteins into and across the cell membrane, serving as an ATP-driven molecular motor driving the stepwise translocation of polypeptide chains across the membrane. Its function is as follows. Probably participates in protein translocation into and across both the cytoplasmic and thylakoid membranes in cyanobacterial cells. The polypeptide is Protein translocase subunit SecA (Prochlorococcus marinus (strain MIT 9313)).